The primary structure comprises 417 residues: MEQTKALNALEPFIVLSKSATSPRAAADLVTRVTSAPNTFIFTELLQTPQIQSLEYSHEFSSYLTLLQIFSHGTYADYIANASALPALNDDQKLKLRQLSLLTLVANDGSNVPLDYDAMQRENNQAQPPNQSYASLTRRLELSSARELEELVISAIYAGLIEGQLDPANEMVQINSVAALRDVPARGVNGLLSSLQGWAGRCQATLQELEATMANLRDEADRRATEEQEWNNKMSQLLEDEQKGAVPSSSSSSLPFSWFNNTRGGGGGGDGAGAGGSFRGSGYSRGGGLSQGYRSSQRGSHQQHQNQSRQQQNHHHHHQSNQSGTNSLLTSGGGSYLSFREGPSAVSPSAAAGLMGSSTSFAALGGMETGSGSGSGPLGKRGSSDMDDSEEDIDDDTMDLDDEGDETKRGSKRKLTA.

In terms of domain architecture, PCI spans 2–179 (EQTKALNALE…EMVQINSVAA (178 aa)). Residues 240–417 (DEQKGAVPSS…KRGSKRKLTA (178 aa)) form a disordered region. Residues 263-290 (RGGGGGGDGAGAGGSFRGSGYSRGGGLS) show a composition bias toward gly residues. Composition is skewed to low complexity over residues 291–311 (QGYR…SRQQ), 320–330 (SNQSGTNSLLT), and 343–352 (PSAVSPSAAA). The span at 367–379 (METGSGSGSGPLG) shows a compositional bias: gly residues. Residues 385–405 (DMDDSEEDIDDDTMDLDDEGD) show a composition bias toward acidic residues.

The protein belongs to the CSN7/EIF3M family. CSN7 subfamily. In terms of assembly, component of the COP9 signalosome (CSN) complex.

It localises to the cytoplasm. The protein localises to the nucleus. In terms of biological role, component of the COP9 signalosome (CSN) complex that acts as an regulator of the ubiquitin (Ubl) conjugation pathway by mediating the deneddylation of the cullin subunit of SCF-type E3 ubiquitin-protein ligase complexes. The CSN complex is involved in the regulation of the circadian clock through its control of the stability of the SCF(FWD1) complex. The polypeptide is COP9 signalosome complex subunit 7a (csn-7a) (Neurospora crassa (strain ATCC 24698 / 74-OR23-1A / CBS 708.71 / DSM 1257 / FGSC 987)).